A 330-amino-acid chain; its full sequence is Deoxyhypusine hydroxylase (330 aa).

HEAT-like PBS-type repeat units follow at residues 57 to 83, 90 to 116, and 199 to 225; these read LKHELAYCLGQIRNPLALPVLESVLRN, VRHEAAEAMGAISTADSIPILKQYLSD, and ERYRAMFALRNIGSPAAVDALAAGFSG. Fe cation is bound by residues histidine 59, glutamate 60, histidine 92, and glutamate 93. Histidine 232, glutamate 233, histidine 265, and glutamate 266 together coordinate Fe cation. Residues 263–289 form an HEAT-like PBS-type 4 repeat; that stretch reads VRHEAAEALGGIATPEVLPPLKEWVAR.

This sequence belongs to the deoxyhypusine hydroxylase family. Requires Fe(2+) as cofactor.

The protein localises to the cytoplasm. Its subcellular location is the nucleus. It carries out the reaction [eIF5A protein]-deoxyhypusine + AH2 + O2 = [eIF5A protein]-hypusine + A + H2O. The protein operates within protein modification; eIF5A hypusination. Its function is as follows. Catalyzes the hydroxylation of the N(6)-(4-aminobutyl)-L-lysine intermediate to form hypusine, an essential post-translational modification only found in mature eIF-5A factor. This Lentinula edodes (Shiitake mushroom) protein is Deoxyhypusine hydroxylase.